Consider the following 643-residue polypeptide: 1-deoxy-D-xylulose-5-phosphate synthase (643 aa).

Thiamine diphosphate-binding positions include histidine 78 and 119–121 (AHS). Aspartate 150 contributes to the Mg(2+) binding site. Thiamine diphosphate is bound by residues 151 to 152 (GS), asparagine 179, tyrosine 288, and glutamate 370. Asparagine 179 contributes to the Mg(2+) binding site.

This sequence belongs to the transketolase family. DXPS subfamily. Homodimer. The cofactor is Mg(2+). Requires thiamine diphosphate as cofactor.

It catalyses the reaction D-glyceraldehyde 3-phosphate + pyruvate + H(+) = 1-deoxy-D-xylulose 5-phosphate + CO2. It functions in the pathway metabolic intermediate biosynthesis; 1-deoxy-D-xylulose 5-phosphate biosynthesis; 1-deoxy-D-xylulose 5-phosphate from D-glyceraldehyde 3-phosphate and pyruvate: step 1/1. In terms of biological role, catalyzes the acyloin condensation reaction between C atoms 2 and 3 of pyruvate and glyceraldehyde 3-phosphate to yield 1-deoxy-D-xylulose-5-phosphate (DXP). This chain is 1-deoxy-D-xylulose-5-phosphate synthase, found in Brucella abortus (strain S19).